The chain runs to 722 residues: D-(-)-3-hydroxybutyrate oligomer hydrolase (722 aa).

A compositionally biased stretch (polar residues) spans 1–11 (MQQRHLSQSAH). Residues 1-20 (MQQRHLSQSAHSHGHGTRRA) form a disordered region. Residues 1–36 (MQQRHLSQSAHSHGHGTRRAHRRNTIAIAVATLAVA) form the signal peptide. The Charge relay system role is filled by Ser327. Residues 671–697 (PPSQVVRTTPRGGADTDTVGPRIQPSN) form a disordered region.

Belongs to the D-(-)-3-hydroxybutyrate oligomer hydrolase family.

Its subcellular location is the secreted. The enzyme catalyses (3R)-hydroxybutanoate dimer + H2O = 2 (R)-3-hydroxybutanoate + H(+). It functions in the pathway lipid metabolism; butanoate metabolism. In terms of biological role, participates in the degradation of poly-3-hydroxybutyrate (PHB). It works downstream of poly(3-hydroxybutyrate) depolymerase, hydrolyzing D(-)-3-hydroxybutyrate oligomers of various length (3HB-oligomers) into 3HB-monomers. The sequence is that of D-(-)-3-hydroxybutyrate oligomer hydrolase from Cupriavidus metallidurans (strain ATCC 43123 / DSM 2839 / NBRC 102507 / CH34) (Ralstonia metallidurans).